A 156-amino-acid polypeptide reads, in one-letter code: Small ribosomal subunit protein uS7 (156 aa).

The protein belongs to the universal ribosomal protein uS7 family. In terms of assembly, part of the 30S ribosomal subunit. Contacts proteins S9 and S11.

In terms of biological role, one of the primary rRNA binding proteins, it binds directly to 16S rRNA where it nucleates assembly of the head domain of the 30S subunit. Is located at the subunit interface close to the decoding center, probably blocks exit of the E-site tRNA. This chain is Small ribosomal subunit protein uS7, found in Rhizorhabdus wittichii (strain DSM 6014 / CCUG 31198 / JCM 15750 / NBRC 105917 / EY 4224 / RW1) (Sphingomonas wittichii).